A 224-amino-acid polypeptide reads, in one-letter code: Ribonuclease HII (224 aa).

Residues 1–210 (MKLGGIDEAG…LKKIEEKLQK (210 aa)) enclose the RNase H type-2 domain. 3 residues coordinate a divalent metal cation: D7, E8, and D105.

Belongs to the RNase HII family. It depends on Mn(2+) as a cofactor. The cofactor is Mg(2+).

The protein localises to the cytoplasm. The catalysed reaction is Endonucleolytic cleavage to 5'-phosphomonoester.. In terms of biological role, endonuclease that specifically degrades the RNA of RNA-DNA hybrids. This chain is Ribonuclease HII, found in Thermococcus sibiricus (strain DSM 12597 / MM 739).